Consider the following 170-residue polypeptide: RNA pyrophosphohydrolase (170 aa).

One can recognise a Nudix hydrolase domain in the interval 6 to 149 (GFRPNVGIIL…KRDVYRRALK (144 aa)). The Nudix box signature appears at 39-60 (GGIKHNESPENALYRELEEEVG).

Belongs to the Nudix hydrolase family. RppH subfamily. A divalent metal cation is required as a cofactor.

Its function is as follows. Accelerates the degradation of transcripts by removing pyrophosphate from the 5'-end of triphosphorylated RNA, leading to a more labile monophosphorylated state that can stimulate subsequent ribonuclease cleavage. The protein is RNA pyrophosphohydrolase of Saccharophagus degradans (strain 2-40 / ATCC 43961 / DSM 17024).